A 52-amino-acid polypeptide reads, in one-letter code: Mitogenic lectin alpha chain (52 aa).

Belongs to the leguminous lectin family. Tetramer of two alpha and two beta chains.

The polypeptide is Mitogenic lectin alpha chain (Vicia sativa (Spring vetch)).